The following is a 277-amino-acid chain: Phosphate import ATP-binding protein PstB 2 (277 aa).

The 242-residue stretch at 31–272 (IEVPGLSLFY…PAKKQTEDYI (242 aa)) folds into the ABC transporter domain. 63-70 (GPSGCGKS) lines the ATP pocket.

It belongs to the ABC transporter superfamily. Phosphate importer (TC 3.A.1.7) family. The complex is composed of two ATP-binding proteins (PstB), two transmembrane proteins (PstC and PstA) and a solute-binding protein (PstS).

It is found in the cell inner membrane. It catalyses the reaction phosphate(out) + ATP + H2O = ADP + 2 phosphate(in) + H(+). Its function is as follows. Part of the ABC transporter complex PstSACB involved in phosphate import. Responsible for energy coupling to the transport system. In Pseudomonas syringae pv. tomato (strain ATCC BAA-871 / DC3000), this protein is Phosphate import ATP-binding protein PstB 2.